The following is a 101-amino-acid chain: Protein Tat (101 aa).

The tract at residues 1 to 24 (MEPVDPNLEPWNHPGSQPKTACNN) is interaction with human CREBBP. Residues 1–48 (MEPVDPNLEPWNHPGSQPKTACNNCYCKRCSYHCLVCFQTKGLGISYG) form a transactivation region. Residues Cys-22, Cys-25, and Cys-27 each coordinate Zn(2+). A cysteine-rich region spans residues 22–37 (CNNCYCKRCSYHCLVC). At Lys-28 the chain carries N6-acetyllysine; by host PCAF. 4 residues coordinate Zn(2+): Cys-30, His-33, Cys-34, and Cys-37. Positions 38–48 (FQTKGLGISYG) are core. Residues 47-101 (YGRKKRRQRRSAPPSSEDHQNPIPKQPLPQTRGDQTGSEESKKKVESKTETDPFD) are disordered. A Nuclear localization signal, RNA-binding (TAR), and protein transduction motif is present at residues 49–57 (RKKRRQRRS). An interaction with the host capping enzyme RNGTT region spans residues 49-86 (RKKRRQRRSAPPSSEDHQNPIPKQPLPQTRGDQTGSEE). N6-acetyllysine; by host EP300 and GCN5L2 is present on residues Lys-50 and Lys-51. Asymmetric dimethylarginine; by host PRMT6 is present on residues Arg-52 and Arg-53. Residue Lys-71 forms a Glycyl lysine isopeptide (Lys-Gly) (interchain with G-Cter in ubiquitin) linkage. The Cell attachment site signature appears at 78 to 80 (RGD). The segment covering 85–101 (EESKKKVESKTETDPFD) has biased composition (basic and acidic residues).

Belongs to the lentiviruses Tat family. Interacts with host CCNT1. Associates with the P-TEFb complex composed at least of Tat, P-TEFb (CDK9 and CCNT1), TAR RNA, RNA Pol II. Recruits the HATs CREBBP, TAF1/TFIID, EP300, PCAF and GCN5L2. Interacts with host KAT5/Tip60; this interaction targets the latter to degradation. Interacts with the host deacetylase SIRT1. Interacts with host capping enzyme RNGTT; this interaction stimulates RNGTT. Binds to host KDR, and to the host integrins ITGAV/ITGB3 and ITGA5/ITGB1. Interacts with host KPNB1/importin beta-1 without previous binding to KPNA1/importin alpha-1. Interacts with EIF2AK2. Interacts with host nucleosome assembly protein NAP1L1; this interaction may be required for the transport of Tat within the nucleus, since the two proteins interact at the nuclear rim. Interacts with host C1QBP/SF2P32; this interaction involves lysine-acetylated Tat. Interacts with the host chemokine receptors CCR2, CCR3 and CXCR4. Interacts with host DPP4/CD26; this interaction may trigger an anti-proliferative effect. Interacts with host LDLR. Interacts with the host extracellular matrix metalloproteinase MMP1. Interacts with host PRMT6; this interaction mediates Tat's methylation. Interacts with, and is ubiquitinated by MDM2/Hdm2. Interacts with host PSMC3 and HTATIP2. Interacts with STAB1; this interaction may overcome SATB1-mediated repression of IL2 and IL2RA (interleukin) in T cells by binding to the same domain than HDAC1. Interacts (when acetylated) with human CDK13, thereby increasing HIV-1 mRNA splicing and promoting the production of the doubly spliced HIV-1 protein Nef. Interacts with host TBP; this interaction modulates the activity of transcriptional pre-initiation complex. Interacts with host RELA. Interacts with host PLSCR1; this interaction negatively regulates Tat transactivation activity by altering its subcellular distribution. Asymmetrical arginine methylation by host PRMT6 seems to diminish the transactivation capacity of Tat and affects the interaction with host CCNT1. In terms of processing, acetylation by EP300, CREBBP, GCN5L2/GCN5 and PCAF regulates the transactivation activity of Tat. EP300-mediated acetylation of Lys-50 promotes dissociation of Tat from the TAR RNA through the competitive binding to PCAF's bromodomain. In addition, the non-acetylated Tat's N-terminus can also interact with PCAF. PCAF-mediated acetylation of Lys-28 enhances Tat's binding to CCNT1. Lys-50 is deacetylated by SIRT1. Post-translationally, polyubiquitination by host MDM2 does not target Tat to degradation, but activates its transactivation function and fosters interaction with CCNT1 and TAR RNA. Phosphorylated by EIF2AK2 on serine and threonine residues adjacent to the basic region important for TAR RNA binding and function. Phosphorylation of Tat by EIF2AK2 is dependent on the prior activation of EIF2AK2 by dsRNA.

The protein localises to the host nucleus. The protein resides in the host nucleolus. It localises to the host cytoplasm. Its subcellular location is the secreted. Transcriptional activator that increases RNA Pol II processivity, thereby increasing the level of full-length viral transcripts. Recognizes a hairpin structure at the 5'-LTR of the nascent viral mRNAs referred to as the transactivation responsive RNA element (TAR) and recruits the cyclin T1-CDK9 complex (P-TEFb complex) that will in turn hyperphosphorylate the RNA polymerase II to allow efficient elongation. The CDK9 component of P-TEFb and other Tat-activated kinases hyperphosphorylate the C-terminus of RNA Pol II that becomes stabilized and much more processive. Other factors such as HTATSF1/Tat-SF1, SUPT5H/SPT5, and HTATIP2 are also important for Tat's function. Besides its effect on RNA Pol II processivity, Tat induces chromatin remodeling of proviral genes by recruiting the histone acetyltransferases (HATs) CREBBP, EP300 and PCAF to the chromatin. This also contributes to the increase in proviral transcription rate, especially when the provirus integrates in transcriptionally silent region of the host genome. To ensure maximal activation of the LTR, Tat mediates nuclear translocation of NF-kappa-B by interacting with host RELA. Through its interaction with host TBP, Tat may also modulate transcription initiation. Tat can reactivate a latently infected cell by penetrating in it and transactivating its LTR promoter. In the cytoplasm, Tat is thought to act as a translational activator of HIV-1 mRNAs. Functionally, extracellular circulating Tat can be endocytosed by surrounding uninfected cells via the binding to several surface receptors such as CD26, CXCR4, heparan sulfate proteoglycans (HSPG) or LDLR. Neurons are rarely infected, but they internalize Tat via their LDLR. Through its interaction with nuclear HATs, Tat is potentially able to control the acetylation-dependent cellular gene expression. Modulates the expression of many cellular genes involved in cell survival, proliferation or in coding for cytokines or cytokine receptors. Tat plays a role in T-cell and neurons apoptosis. Tat induced neurotoxicity and apoptosis probably contribute to neuroAIDS. Circulating Tat also acts as a chemokine-like and/or growth factor-like molecule that binds to specific receptors on the surface of the cells, affecting many cellular pathways. In the vascular system, Tat binds to ITGAV/ITGB3 and ITGA5/ITGB1 integrins dimers at the surface of endothelial cells and competes with bFGF for heparin-binding sites, leading to an excess of soluble bFGF. The polypeptide is Protein Tat (Human immunodeficiency virus type 1 group M subtype C (isolate 92BR025) (HIV-1)).